A 408-amino-acid polypeptide reads, in one-letter code: Protein EcsB (408 aa).

9 helical membrane passes run 30–50 (HLVI…SKWI), 53–73 (IPAH…VLTS), 111–131 (LFPL…VTPG), 134–154 (LVSY…NQVM), 180–200 (LVLY…YVIM), 284–304 (YLGI…YVSA), 308–328 (IAAV…LPLF), 351–371 (YFSL…VASA), and 374–394 (AGLT…FVVL).

Its subcellular location is the cell membrane. Presumed to form part of an ABC-transporter, it may form a transport channel. This is Protein EcsB (ecsB) from Bacillus subtilis (strain 168).